A 340-amino-acid polypeptide reads, in one-letter code: tRNA-dihydrouridine(20/20a) synthase (340 aa).

Residues 22–24 (PMM) and Gln-75 each bind FMN. The active-site Proton donor is the Cys-105. FMN is bound by residues Lys-144, His-177, 217–219 (NGG), and 239–240 (GR).

Belongs to the Dus family. DusA subfamily. FMN is required as a cofactor.

It carries out the reaction 5,6-dihydrouridine(20) in tRNA + NADP(+) = uridine(20) in tRNA + NADPH + H(+). The enzyme catalyses 5,6-dihydrouridine(20) in tRNA + NAD(+) = uridine(20) in tRNA + NADH + H(+). The catalysed reaction is 5,6-dihydrouridine(20a) in tRNA + NADP(+) = uridine(20a) in tRNA + NADPH + H(+). It catalyses the reaction 5,6-dihydrouridine(20a) in tRNA + NAD(+) = uridine(20a) in tRNA + NADH + H(+). Its function is as follows. Catalyzes the synthesis of 5,6-dihydrouridine (D), a modified base found in the D-loop of most tRNAs, via the reduction of the C5-C6 double bond in target uridines. Specifically modifies U20 and U20a in tRNAs. The protein is tRNA-dihydrouridine(20/20a) synthase of Xylella fastidiosa (strain 9a5c).